Reading from the N-terminus, the 433-residue chain is Ribonuclease T2-like (433 aa).

4 cysteine pairs are disulfide-bonded: C28/C47, C36/C95, C46/C171, and C103/C163. N-linked (GlcNAc...) asparagine glycans are attached at residues N38 and N71. Catalysis depends on residues H88, E156, and H160. N-linked (GlcNAc...) asparagine glycans are attached at residues N221 and N263. C247 and C283 are joined by a disulfide.

This sequence belongs to the RNase T2 family.

It is found in the vacuole lumen. The protein resides in the cytoplasm. It catalyses the reaction a ribonucleotidyl-ribonucleotide-RNA + H2O = a 3'-end 3'-phospho-ribonucleotide-RNA + a 5'-end dephospho-ribonucleoside-RNA + H(+). Its function is as follows. Rnase which modulates cell survival under stress conditions. Released from the vacuole to the cytoplasm during stress to promote tRNA and rRNA cleavage and to activate separately a downstream pathway that promotes cell death. Involved in cell size, vacuolar morphology and growth at high temperatures and high salt concentration. This Candida glabrata (strain ATCC 2001 / BCRC 20586 / JCM 3761 / NBRC 0622 / NRRL Y-65 / CBS 138) (Yeast) protein is Ribonuclease T2-like (RNY1).